The primary structure comprises 516 residues: Maturase K (516 aa).

It belongs to the intron maturase 2 family. MatK subfamily.

The protein localises to the plastid. The protein resides in the chloroplast. Usually encoded in the trnK tRNA gene intron. Probably assists in splicing its own and other chloroplast group II introns. The protein is Maturase K of Medeola virginiana (Indian cucumber root).